A 267-amino-acid chain; its full sequence is Putative ankyrin repeat protein RF_1099 (267 aa).

4 ANK repeats span residues 46–75, 78–107, 136–165, and 170–199; these read DPIT…GVNQ, LGWV…SMSL, DGIT…NPNV, and TGMT…DPNI. Residues 238–265 adopt a coiled-coil conformation; sequence KQKIIKERNSIKTRNKEKEKEIKKLFNS.

This is Putative ankyrin repeat protein RF_1099 from Rickettsia felis (strain ATCC VR-1525 / URRWXCal2) (Rickettsia azadi).